We begin with the raw amino-acid sequence, 190 residues long: Segregation and condensation protein B (190 aa).

The protein belongs to the ScpB family. In terms of assembly, homodimer. Homodimerization may be required to stabilize the binding of ScpA to the Smc head domains. Component of a cohesin-like complex composed of ScpA, ScpB and the Smc homodimer, in which ScpA and ScpB bind to the head domain of Smc. The presence of the three proteins is required for the association of the complex with DNA.

The protein resides in the cytoplasm. Participates in chromosomal partition during cell division. May act via the formation of a condensin-like complex containing Smc and ScpA that pull DNA away from mid-cell into both cell halves. This is Segregation and condensation protein B from Ruminiclostridium cellulolyticum (strain ATCC 35319 / DSM 5812 / JCM 6584 / H10) (Clostridium cellulolyticum).